The chain runs to 443 residues: UDP-glucuronic acid decarboxylase 4 (443 aa).

Alanine 2 carries the post-translational modification N-acetylalanine. Topologically, residues 2 to 43 (ASELTNRRHEIEQPEAESYYPKPIKPWFVAIRPIRYMLREQR) are cytoplasmic. The helical; Signal-anchor for type II membrane protein transmembrane segment at 44–64 (LVFVLVGIAIATLGFTIFSKS) threads the bilayer. Residues 65 to 443 (SNHQPIPYDV…DSSTTSSSTE (379 aa)) lie on the Lumenal side of the membrane. Residue 151–176 (DNFFTGRKENVMHHFNNPNFEMIRHD) coordinates NAD(+). Arginine 260 provides a ligand contact to substrate. The Proton acceptor role is filled by tyrosine 263. Position 263–267 (263–267 (YDEGK)) interacts with NAD(+). Position 292 (asparagine 292) interacts with substrate. Position 304 (arginine 304) interacts with NAD(+). Residues 305 to 309 (VVSNF), 322 to 329 (YGDGKQTR), and 389 to 393 (DPHKR) each bind substrate.

It belongs to the NAD(P)-dependent epimerase/dehydratase family. UDP-glucuronic acid decarboxylase subfamily. Requires NAD(+) as cofactor.

Its subcellular location is the golgi apparatus. It localises to the golgi stack membrane. It carries out the reaction UDP-alpha-D-glucuronate + H(+) = UDP-alpha-D-xylose + CO2. The protein operates within nucleotide-sugar biosynthesis; UDP-alpha-D-xylose biosynthesis; UDP-alpha-D-xylose from UDP-alpha-D-glucuronate: step 1/1. In terms of biological role, catalyzes the NAD-dependent decarboxylation of UDP-glucuronic acid to UDP-xylose. Necessary for the biosynthesis of the core tetrasaccharide in glycosaminoglycan biosynthesis. The sequence is that of UDP-glucuronic acid decarboxylase 4 (UXS4) from Arabidopsis thaliana (Mouse-ear cress).